The sequence spans 610 residues: MARMSTNSTTPLSHIRNFSIVAHIDHGKSTLADRLIQTTGGLAEREMSEQVLDNMEIERERGITIKAQTVRLHYQANNGEKYVLNLIDTPGHVDFAYEVSRSLSACEGSLLVVDASQGVEAQTLANVYQAIDNNHELVTVLNKIDLPAAEPDRIKEQIEEVIGIDASEAVLISAKTGLGIPDVLEAIVHKLPAPKSAGGEKAPLKALLVDSWYDTYLGVMVLVRIIDGVLTKGQTIRMMGTDAKYQVERVGVLTPKMVNVDSLGPGEIGFITASIKEVADTRVGDTITEDKRPTAEALPGFKPAQPVVFCGLFPVDAADFEDLRAAMGKLRLNDASFSFEMESSAALGFGFRCGFLGLLHLEIIQERLEREFDLDLIATAPSVVYQLTMTDGSERELHNPADMPDVVKIAEIREPWIKATIMTPDDYLGGILKLCQDRRGIQTELTYVGTRAMVTYELPLNEVVFDFYDRLKSISKGYASFDYHLEGYRAGNLVKMSILVNGEPVDALSMLVHRTAAEKRGRDMCERLKELIPKHMFKIPIQAAIGGNVIARETISALRKDVTAKCYGGDATRKRKLLDKQKEGKKRMRQFGKVEIPQEAFIAALKMGDE.

A tr-type G domain is found at 13 to 195 (SHIRNFSIVA…AIVHKLPAPK (183 aa)). GTP contacts are provided by residues 25 to 30 (DHGKST) and 142 to 145 (NKID).

The protein belongs to the TRAFAC class translation factor GTPase superfamily. Classic translation factor GTPase family. LepA subfamily.

The protein resides in the cell inner membrane. The catalysed reaction is GTP + H2O = GDP + phosphate + H(+). In terms of biological role, required for accurate and efficient protein synthesis under certain stress conditions. May act as a fidelity factor of the translation reaction, by catalyzing a one-codon backward translocation of tRNAs on improperly translocated ribosomes. Back-translocation proceeds from a post-translocation (POST) complex to a pre-translocation (PRE) complex, thus giving elongation factor G a second chance to translocate the tRNAs correctly. Binds to ribosomes in a GTP-dependent manner. This Rhizobium etli (strain ATCC 51251 / DSM 11541 / JCM 21823 / NBRC 15573 / CFN 42) protein is Elongation factor 4.